The sequence spans 124 residues: Large ribosomal subunit protein bL20 (124 aa).

It belongs to the bacterial ribosomal protein bL20 family.

Binds directly to 23S ribosomal RNA and is necessary for the in vitro assembly process of the 50S ribosomal subunit. It is not involved in the protein synthesizing functions of that subunit. This is Large ribosomal subunit protein bL20 from Ehrlichia canis (strain Jake).